We begin with the raw amino-acid sequence, 468 residues long: Peroxisome proliferator-activated receptor alpha (468 aa).

A DNA-binding region (nuclear receptor) is located at residues 99 to 173 (NIECRICGDK…VGMSHNAIRF (75 aa)). NR C4-type zinc fingers lie at residues 102 to 122 (CRIC…CEGC) and 139 to 161 (CDRS…FHKC). The NR LBD domain occupies 239-466 (FVIHDMETLC…HPLLQEIYRD (228 aa)). Residues Ser-280, Tyr-314, and Tyr-464 each contribute to the indeglitazar site. The tract at residues 304 to 433 (DQVTLLKYGV…PKLLQKMADL (130 aa)) is required for heterodimerization with RXRA.

The protein belongs to the nuclear hormone receptor family. NR1 subfamily. Heterodimer; with RXRA. This heterodimerization is required for DNA binding and transactivation activity. Interacts with NCOA3 coactivator. Interacts with CITED2; the interaction stimulates its transcriptional activity. Also interacts with PPARBP in vitro. Interacts with AKAP13, LPIN1, PRDM16 and coactivator NCOA6. Interacts with ASXL1 and ASXL2. Interacts with PER2. Interacts with SIRT1; the interaction seems to be modulated by NAD(+) levels. Interacts with CRY1 and CRY2. In hepatocytes, interacts with PAQR3 and HUWE1; the interactions promote PPARA poylubiquitination and HUWE1-mediated degradation. Post-translationally, ubiquitinated by E3 ubiquitin-protein ligase HUWE1; leading to proteasomal degradation. In terms of processing, phosphorylated. Skeletal muscle, liver, heart and kidney. Expressed in monocytes.

It is found in the nucleus. In terms of biological role, ligand-activated transcription factor. Key regulator of lipid metabolism. Activated by the endogenous ligand 1-palmitoyl-2-oleoyl-sn-glycerol-3-phosphocholine (16:0/18:1-GPC). Activated by oleylethanolamide, a naturally occurring lipid that regulates satiety. Receptor for peroxisome proliferators such as hypolipidemic drugs and fatty acids. Regulates the peroxisomal beta-oxidation pathway of fatty acids. Functions as a transcription activator for the ACOX1 and P450 genes. Transactivation activity requires heterodimerization with RXRA and is antagonized by NR2C2. May be required for the propagation of clock information to metabolic pathways regulated by PER2. The sequence is that of Peroxisome proliferator-activated receptor alpha (PPARA) from Homo sapiens (Human).